We begin with the raw amino-acid sequence, 145 residues long: 3-dehydroquinate dehydratase (145 aa).

Tyr22 acts as the Proton acceptor in catalysis. Asn73, His79, and Asp86 together coordinate substrate. His99 serves as the catalytic Proton donor. Substrate is bound by residues 100–101 (LS) and Arg110.

Belongs to the type-II 3-dehydroquinase family. In terms of assembly, homododecamer.

The enzyme catalyses 3-dehydroquinate = 3-dehydroshikimate + H2O. Its pathway is metabolic intermediate biosynthesis; chorismate biosynthesis; chorismate from D-erythrose 4-phosphate and phosphoenolpyruvate: step 3/7. In terms of biological role, catalyzes a trans-dehydration via an enolate intermediate. In Prochlorococcus marinus (strain NATL1A), this protein is 3-dehydroquinate dehydratase.